Reading from the N-terminus, the 202-residue chain is Endoribonuclease YbeY (202 aa).

Positions 120, 124, and 130 each coordinate Zn(2+).

The protein belongs to the endoribonuclease YbeY family. Zn(2+) is required as a cofactor.

It is found in the cytoplasm. Its function is as follows. Single strand-specific metallo-endoribonuclease involved in late-stage 70S ribosome quality control and in maturation of the 3' terminus of the 16S rRNA. The protein is Endoribonuclease YbeY of Corynebacterium kroppenstedtii (strain DSM 44385 / JCM 11950 / CIP 105744 / CCUG 35717).